The chain runs to 154 residues: Endoribonuclease YbeY (154 aa).

3 residues coordinate Zn(2+): His113, His117, and His123.

This sequence belongs to the endoribonuclease YbeY family. Zn(2+) is required as a cofactor.

The protein localises to the cytoplasm. Single strand-specific metallo-endoribonuclease involved in late-stage 70S ribosome quality control and in maturation of the 3' terminus of the 16S rRNA. The polypeptide is Endoribonuclease YbeY (Vibrio vulnificus (strain YJ016)).